The chain runs to 120 residues: Ribonuclease P protein component 4 (120 aa).

C68, C71, C97, and C100 together coordinate Zn(2+).

The protein belongs to the eukaryotic/archaeal RNase P protein component 4 family. As to quaternary structure, consists of a catalytic RNA component and at least 5 protein subunits. Forms a heterodimeric subcomplex with Rnp1. Reconstituted enzyme missing individual protein subunits is suboptimally active, showing each subunit contributes to optimization of activity. Zn(2+) is required as a cofactor.

Its subcellular location is the cytoplasm. It carries out the reaction Endonucleolytic cleavage of RNA, removing 5'-extranucleotides from tRNA precursor.. Part of ribonuclease P, a protein complex that generates mature tRNA molecules by cleaving their 5'-ends. Binds RNase P RNA. The polypeptide is Ribonuclease P protein component 4 (Pyrococcus horikoshii (strain ATCC 700860 / DSM 12428 / JCM 9974 / NBRC 100139 / OT-3)).